Reading from the N-terminus, the 369-residue chain is Flagellar P-ring protein (369 aa).

Positions 1–24 (MKTLHRCIGVALLALGALAGTAHA) are cleaved as a signal peptide.

Belongs to the FlgI family. As to quaternary structure, the basal body constitutes a major portion of the flagellar organelle and consists of four rings (L,P,S, and M) mounted on a central rod.

It localises to the periplasm. The protein resides in the bacterial flagellum basal body. Its function is as follows. Assembles around the rod to form the L-ring and probably protects the motor/basal body from shearing forces during rotation. The sequence is that of Flagellar P-ring protein from Ralstonia nicotianae (strain ATCC BAA-1114 / GMI1000) (Ralstonia solanacearum).